Here is a 314-residue protein sequence, read N- to C-terminus: Mycothiol acetyltransferase (314 aa).

2 consecutive N-acetyltransferase domains span residues 18–156 (ATIR…RPLA) and 168–314 (IRIA…MYQL). Residue glutamate 38 participates in 1D-myo-inositol 2-(L-cysteinylamino)-2-deoxy-alpha-D-glucopyranoside binding. 92 to 94 (VVV) serves as a coordination point for acetyl-CoA. Glutamate 195, lysine 234, and glutamate 248 together coordinate 1D-myo-inositol 2-(L-cysteinylamino)-2-deoxy-alpha-D-glucopyranoside. Acetyl-CoA is bound by residues 252 to 254 (VGL) and 259 to 265 (QGHGLGR). Residue tyrosine 286 coordinates 1D-myo-inositol 2-(L-cysteinylamino)-2-deoxy-alpha-D-glucopyranoside.

The protein belongs to the acetyltransferase family. MshD subfamily. Monomer.

The catalysed reaction is 1D-myo-inositol 2-(L-cysteinylamino)-2-deoxy-alpha-D-glucopyranoside + acetyl-CoA = mycothiol + CoA + H(+). Its function is as follows. Catalyzes the transfer of acetyl from acetyl-CoA to desacetylmycothiol (Cys-GlcN-Ins) to form mycothiol. In Catenulispora acidiphila (strain DSM 44928 / JCM 14897 / NBRC 102108 / NRRL B-24433 / ID139908), this protein is Mycothiol acetyltransferase.